The sequence spans 123 residues: Large ribosomal subunit protein bL12 (123 aa).

It belongs to the bacterial ribosomal protein bL12 family. Homodimer. Part of the ribosomal stalk of the 50S ribosomal subunit. Forms a multimeric L10(L12)X complex, where L10 forms an elongated spine to which 2 to 4 L12 dimers bind in a sequential fashion. Binds GTP-bound translation factors.

In terms of biological role, forms part of the ribosomal stalk which helps the ribosome interact with GTP-bound translation factors. Is thus essential for accurate translation. In Desulfotalea psychrophila (strain LSv54 / DSM 12343), this protein is Large ribosomal subunit protein bL12.